The following is a 417-amino-acid chain: Histidine--tRNA ligase (417 aa).

Belongs to the class-II aminoacyl-tRNA synthetase family. Homodimer.

It localises to the cytoplasm. It catalyses the reaction tRNA(His) + L-histidine + ATP = L-histidyl-tRNA(His) + AMP + diphosphate + H(+). The protein is Histidine--tRNA ligase of Nitratidesulfovibrio vulgaris (strain ATCC 29579 / DSM 644 / CCUG 34227 / NCIMB 8303 / VKM B-1760 / Hildenborough) (Desulfovibrio vulgaris).